A 507-amino-acid polypeptide reads, in one-letter code: Dolichyl pyrophosphate Man9GlcNAc2 alpha-1,3-glucosyltransferase (507 aa).

The Cytoplasmic portion of the chain corresponds to 1 to 3; the sequence is MEK. Residues 4-24 traverse the membrane as a helical segment; it reads WYLMTVVVLIGLTVRWTVSLN. The Lumenal segment spans residues 25 to 114; it reads SYSGAGKPPM…SQAHKLFMRT (90 aa). The N-linked (GlcNAc...) asparagine glycan is linked to N59. The chain crosses the membrane as a helical span at residues 115–135; the sequence is TVLIADLLIYIPAVVLYCCCL. Topologically, residues 136–143 are cytoplasmic; sequence KEISTKKK. The helical transmembrane segment at 144 to 164 threads the bilayer; the sequence is IANALCILLYPGLILIDYGHF. At 165-172 the chain is on the lumenal side; that stretch reads QYNSVSLG. The helical transmembrane segment at 173 to 193 threads the bilayer; that stretch reads FALWGVLGISCDCDLLGSLAF. Over 194-226 the chain is Cytoplasmic; it reads CLAINYKQMELYHALPFFCFLLGKCFKKGLKGK. A helical transmembrane segment spans residues 227–247; that stretch reads GFVLLVKLACIVVASFVLCWL. Residues 248-297 lie on the Lumenal side of the membrane; that stretch reads PFFTEREQTLQVLRRLFPVDRGLFEDKVANIWCSFNVFLKIKDILPRHIQ. The chain crosses the membrane as a helical span at residues 298–318; it reads LIMSFCFTFLSLLPACIKLIL. Over 319–323 the chain is Cytoplasmic; sequence QPSSK. The helical transmembrane segment at 324–344 threads the bilayer; sequence GFKFTLVSCALSFFLFSFQVH. Residues 345 to 361 lie on the Lumenal side of the membrane; the sequence is EKSILLVSLPVCLVLSE. Residues 362 to 382 form a helical membrane-spanning segment; sequence IPFMSTWFLLVSTFSMLPLLL. Over 383 to 387 the chain is Cytoplasmic; that stretch reads KDELL. The chain crosses the membrane as a helical span at residues 388–408; it reads MPSVVTTMAFFIACVTSFSIF. Over 409-437 the chain is Lumenal; the sequence is EKTSEEELQLKSFSISVRKYLPCFTFLSR. Residues 438–458 form a helical membrane-spanning segment; it reads IIQYLFLISVITMVLLTLMTV. Residues 459–473 lie on the Cytoplasmic side of the membrane; it reads TLGPPQKLPDLFSVL. Residues 474 to 494 form a helical membrane-spanning segment; the sequence is VCFVSCLNFLFFLVYFNIIIV. At 495-507 the chain is on the lumenal side; the sequence is WDSKSGRNQKKIS.

The protein belongs to the ALG6/ALG8 glucosyltransferase family.

It localises to the endoplasmic reticulum membrane. It carries out the reaction an alpha-D-Man-(1-&gt;2)-alpha-D-Man-(1-&gt;2)-alpha-D-Man-(1-&gt;3)-[alpha-D-Man-(1-&gt;2)-alpha-D-Man-(1-&gt;3)-[alpha-D-Man-(1-&gt;2)-alpha-D-Man-(1-&gt;6)]-alpha-D-Man-(1-&gt;6)]-beta-D-Man-(1-&gt;4)-beta-D-GlcNAc-(1-&gt;4)-alpha-D-GlcNAc-diphospho-di-trans,poly-cis-dolichol + a di-trans,poly-cis-dolichyl beta-D-glucosyl phosphate = an alpha-D-Glc-(1-&gt;3)-alpha-D-Man-(1-&gt;2)-alpha-D-Man-(1-&gt;2)-alpha-D-Man-(1-&gt;3)-[alpha-D-Man-(1-&gt;2)-alpha-D-Man-(1-&gt;3)-[alpha-D-Man-(1-&gt;2)-alpha-D-Man-(1-&gt;6)]-alpha-D-Man-(1-&gt;6)]-beta-D-Man-(1-&gt;4)-beta-D-GlcNAc-(1-&gt;4)-alpha-D-GlcNAc-diphospho-di-trans,poly-cis-dolichol + a di-trans,poly-cis-dolichyl phosphate + H(+). Its pathway is protein modification; protein glycosylation. Dolichyl pyrophosphate Man9GlcNAc2 alpha-1,3-glucosyltransferase that operates in the biosynthetic pathway of dolichol-linked oligosaccharides, the glycan precursors employed in protein asparagine (N)-glycosylation. The assembly of dolichol-linked oligosaccharides begins on the cytosolic side of the endoplasmic reticulum membrane and finishes in its lumen. The sequential addition of sugars to dolichol pyrophosphate produces dolichol-linked oligosaccharides containing fourteen sugars, including two GlcNAcs, nine mannoses and three glucoses. Once assembled, the oligosaccharide is transferred from the lipid to nascent proteins by oligosaccharyltransferases. In the lumen of the endoplasmic reticulum, adds the first glucose residue from dolichyl phosphate glucose (Dol-P-Glc) onto the lipid-linked oligosaccharide intermediate Man(9)GlcNAc(2)-PP-Dol to produce Glc(1)Man(9)GlcNAc(2)-PP-Dol. Glc(1)Man(9)GlcNAc(2)-PP-Dol is a substrate for ALG8, the following enzyme in the biosynthetic pathway. This chain is Dolichyl pyrophosphate Man9GlcNAc2 alpha-1,3-glucosyltransferase, found in Pongo abelii (Sumatran orangutan).